The chain runs to 284 residues: Homeobox-leucine zipper protein HAT4 (284 aa).

The segment covering 48–59 (ESFTSSVPNSDS) has biased composition (polar residues). Residues 48 to 132 (ESFTSSVPNS…DGDNSRKKLR (85 aa)) form a disordered region. A compositionally biased stretch (low complexity) spans 89–100 (VSSPNSTVSSST). Positions 126–185 (NSRKKLRLSKDQSAILEETFKDHSTLNPKQKQALAKQLGLRARQVEVWFQNRRARTKLKQ) form a DNA-binding region, homeobox. Residues 193-214 (LRRCCENLTEENRRLQKEVTEL) are leucine-zipper.

This sequence belongs to the HD-ZIP homeobox family. Class II subfamily. As to quaternary structure, interacts with DNA as homodimer. In terms of tissue distribution, predominantly expressed in leaves and stems.

It is found in the nucleus. Functionally, probable transcription factor involved in the negative regulation of cell elongation and specific cell proliferation processes such as lateral root formation and secondary growth of the vascular system. Acts as a mediator of the red/far-red light effects on leaf cell expansion in the shading response. Binds to the DNA sequence 5'-CAAT[GC]ATTG-3'. Negatively regulates its own expression. The chain is Homeobox-leucine zipper protein HAT4 (HAT4) from Arabidopsis thaliana (Mouse-ear cress).